The following is a 166-amino-acid chain: Small ribosomal subunit protein uS5 (166 aa).

One can recognise an S5 DRBM domain in the interval 12 to 75; that stretch reads YIEKLVQVNR…EAARRNMIQV (64 aa).

Belongs to the universal ribosomal protein uS5 family. In terms of assembly, part of the 30S ribosomal subunit. Contacts proteins S4 and S8.

In terms of biological role, with S4 and S12 plays an important role in translational accuracy. Its function is as follows. Located at the back of the 30S subunit body where it stabilizes the conformation of the head with respect to the body. In Pseudomonas savastanoi pv. phaseolicola (strain 1448A / Race 6) (Pseudomonas syringae pv. phaseolicola (strain 1448A / Race 6)), this protein is Small ribosomal subunit protein uS5.